The chain runs to 564 residues: MGKKYVIGIDYGTESGRAVLVDLEGNEIADHVTPYPHGVIDEVLPESNVQLEPDWALQHPGDYIEVLATAVPAVLQKSGVNPADVIGVGIDFTACTMLPIAGSGEPLCLKPEFKHRPHSWVKLWKHHAAQDEANLLNEMAAKRGEAFLPRYGGKISSEWMIAKIWQILNEDPDIYDQTDLFLEATDWVIFKMTGQLVRNSCTAGYKSIWHKQDGYPSKEFFRALDPRLEHVTETKLRGSIVPLGTRAGVLTKEMAAMMGLLPGTAVAVGNVDAHAAVPGVGVVEPGKMVMAMGTSICHMLLGTEEKYVEGMCGVVEDGIIPGYFGYEAGQSAVGDIFAWYVEQSVPAYVKEAAEKEGVSVHEWLEKRAAAYRPGETGLLALDWWNGNRSVLVDTDLTGLIIGYTLLTKPEEIYRALLEATAFGTRKIIDAFVESGINVDELYACGGLPQKNKLLMQIYADVTNREIKIAASKQTPAVGAAMFAAVAAGKENGGYESIIEAARNMGKVREETFKPIPENVAIYEQLYQEYTKLHDYFGRGENDVMKRLKHWKETARAVKESISLS.

The protein belongs to the ribulokinase family.

The catalysed reaction is D-ribulose + ATP = D-ribulose 5-phosphate + ADP + H(+). The enzyme catalyses L-ribulose + ATP = L-ribulose 5-phosphate + ADP + H(+). It functions in the pathway carbohydrate degradation; L-arabinose degradation via L-ribulose; D-xylulose 5-phosphate from L-arabinose (bacterial route): step 2/3. The sequence is that of Ribulokinase from Anoxybacillus flavithermus (strain DSM 21510 / WK1).